The chain runs to 248 residues: Triosephosphate isomerase (248 aa).

9-11 is a binding site for substrate; sequence NWK. Residue histidine 94 is the Electrophile of the active site. Glutamate 166 serves as the catalytic Proton acceptor. Residues glycine 172, serine 211, and 232–233 contribute to the substrate site; that span reads GG.

Belongs to the triosephosphate isomerase family. Homodimer.

It is found in the cytoplasm. The catalysed reaction is D-glyceraldehyde 3-phosphate = dihydroxyacetone phosphate. It participates in carbohydrate biosynthesis; gluconeogenesis. The protein operates within carbohydrate degradation; glycolysis; D-glyceraldehyde 3-phosphate from glycerone phosphate: step 1/1. In terms of biological role, involved in the gluconeogenesis. Catalyzes stereospecifically the conversion of dihydroxyacetone phosphate (DHAP) to D-glyceraldehyde-3-phosphate (G3P). This is Triosephosphate isomerase from Vesicomyosocius okutanii subsp. Calyptogena okutanii (strain HA).